The following is a 527-amino-acid chain: Glutamate--cysteine ligase (527 aa).

This sequence belongs to the glutamate--cysteine ligase type 1 family. Type 1 subfamily.

It catalyses the reaction L-cysteine + L-glutamate + ATP = gamma-L-glutamyl-L-cysteine + ADP + phosphate + H(+). It functions in the pathway sulfur metabolism; glutathione biosynthesis; glutathione from L-cysteine and L-glutamate: step 1/2. This chain is Glutamate--cysteine ligase, found in Bordetella petrii (strain ATCC BAA-461 / DSM 12804 / CCUG 43448).